The sequence spans 385 residues: Guanine nucleotide-binding protein alpha-5 subunit (385 aa).

A lipid anchor (N-myristoyl glycine) is attached at Gly-2. A lipid anchor (S-palmitoyl cysteine) is attached at Cys-6. The G-alpha domain maps to 32 to 385 (RKIKMLLLGV…GKNYEDTNLE (354 aa)). The tract at residues 35-48 (KMLLLGVTDSGKST) is G1 motif. GTP-binding positions include 40 to 47 (GVTDSGKS), 174 to 180 (IHMRQTT), 199 to 203 (DVGGQ), 298 to 301 (NKKD), and Ala-357. Mg(2+)-binding residues include Ser-47 and Thr-180. The G2 motif stretch occupies residues 172-180 (DLIHMRQTT). The interval 195-204 (IRLIDVGGQK) is G3 motif. Positions 294–301 (MLFLNKKD) are G4 motif. The segment at 355-360 (TQATVT) is G5 motif.

This sequence belongs to the G-alpha family. In terms of assembly, g proteins are composed of 3 units; alpha, beta and gamma. The alpha chain contains the guanine nucleotide binding site.

In terms of biological role, guanine nucleotide-binding proteins (G proteins) are involved as modulators or transducers in various transmembrane signaling systems. The protein is Guanine nucleotide-binding protein alpha-5 subunit (gpa-5) of Caenorhabditis elegans.